The primary structure comprises 374 residues: Tetraacyldisaccharide 4'-kinase (374 aa).

43–50 (TMGGTGKT) provides a ligand contact to ATP.

Belongs to the LpxK family.

The catalysed reaction is a lipid A disaccharide + ATP = a lipid IVA + ADP + H(+). It participates in glycolipid biosynthesis; lipid IV(A) biosynthesis; lipid IV(A) from (3R)-3-hydroxytetradecanoyl-[acyl-carrier-protein] and UDP-N-acetyl-alpha-D-glucosamine: step 6/6. Functionally, transfers the gamma-phosphate of ATP to the 4'-position of a tetraacyldisaccharide 1-phosphate intermediate (termed DS-1-P) to form tetraacyldisaccharide 1,4'-bis-phosphate (lipid IVA). In Leptospira biflexa serovar Patoc (strain Patoc 1 / Ames), this protein is Tetraacyldisaccharide 4'-kinase.